Here is a 338-residue protein sequence, read N- to C-terminus: POU domain, class 4, transcription factor 3 (338 aa).

The short motif at 56 to 65 is the POU-IV box element; it reads RAEALAAVDI. The region spanning 179-256 is the POU-specific domain; it reads DVESDPRELE…VLQAWLEEAE (78 aa). The segment at residues 274–333 is a DNA-binding region (homeobox); it reads RKRKRTSIAAPEKRSLEAYFAIQPRPSSEKIAAIAEKLDLKKNVVRVWFCNQRQKQKRMK.

This sequence belongs to the POU transcription factor family. Class-4 subfamily. Interacts with ISL1. In terms of tissue distribution, brain. Seems to be specific to the retina.

It localises to the nucleus. Its subcellular location is the cytoplasm. Functionally, acts as a transcriptional activator. Acts by binding to sequences related to the consensus octamer motif 5'-ATGCAAAT-3' in the regulatory regions of its target genes. Involved in the auditory system development, required for terminal differentiation of hair cells in the inner ear. In Homo sapiens (Human), this protein is POU domain, class 4, transcription factor 3 (POU4F3).